The following is a 651-amino-acid chain: MALCKKTVGSVLEEWCLNEPLFGCKRHQNVRKKLRLIRIIGLLVSVVAISTFSLSISAFFKMETHSTVLASSLESQKLVHGHQRTLLDFMEQNEGSTPDSPTSMKHEAEHDNATEEHSKGEYPEDLFSLEERRKGAVILHVIGMIYMFIALAIVCDEFFVPSLTVITEKLSISDDVAGATFMAAGGSAPELFTSLIGVFISHSNVGIGTIVGSAVFNILFVIGMCALFSREILNLTWWPLFRDVSFYIVDLILLIIFFLDNLIMWWESLTLLTAYFCYVTFMKFNVQVEEWVKKVLNRNKVEKATTGDAEGKSPTAGDKDDQTLTTKPRLQRGGSSASLHNSLMRNSIFQLMIHTLDPLAEELGSYGNLKYYDTMTEEGKFKERASILHKIAKKKCQVEDSERQNGAANHEKGAKVEVAVTPPSDSGPVQNGIAHNVDEENEEDEDQPLSLAWPDTPRKQLTYLLVLPIVFPLWVSLPDVRNPRSRKFFPITFFGSISWIAFFSYLMVWWAHQVGETIGISEEIMGLTILAAGTSIPDLITSVIVARKGLGDMAVSSSVGSNIFDITVGLPLPWLLYAVINNFSPVTVSSNGLFCAIVLLFIMLLFVILSIAFCKWRMNKFLGFLMFGLYFVFLIVSVLLEDKVIQCPVSI.

Topologically, residues 1–38 (MALCKKTVGSVLEEWCLNEPLFGCKRHQNVRKKLRLIR) are cytoplasmic. The chain crosses the membrane as a helical span at residues 39–59 (IIGLLVSVVAISTFSLSISAF). Residues 60-134 (FKMETHSTVL…DLFSLEERRK (75 aa)) lie on the Extracellular side of the membrane. Residues 92-123 (QNEGSTPDSPTSMKHEAEHDNATEEHSKGEYP) form a disordered region. Residues 93–103 (NEGSTPDSPTS) are compositionally biased toward polar residues. Residues 104–122 (MKHEAEHDNATEEHSKGEY) show a composition bias toward basic and acidic residues. N-linked (GlcNAc...) asparagine glycosylation occurs at N112. The helical transmembrane segment at 135–155 (GAVILHVIGMIYMFIALAIVC) threads the bilayer. Over 156–179 (DEFFVPSLTVITEKLSISDDVAGA) the chain is Cytoplasmic. The stretch at 176-216 (VAGATFMAAGGSAPELFTSLIGVFISHSNVGIGTIVGSAVF) is one Alpha-1 repeat. The helical transmembrane segment at 180–200 (TFMAAGGSAPELFTSLIGVFI) threads the bilayer. Topologically, residues 201–206 (SHSNVG) are extracellular. A helical membrane pass occupies residues 207–227 (IGTIVGSAVFNILFVIGMCAL). The Cytoplasmic segment spans residues 228–245 (FSREILNLTWWPLFRDVS). The helical transmembrane segment at 246–266 (FYIVDLILLIIFFLDNLIMWW) threads the bilayer. Residues 267–459 (ESLTLLTAYF…SLAWPDTPRK (193 aa)) lie on the Extracellular side of the membrane. Positions 304–322 (ATTGDAEGKSPTAGDKDDQ) are enriched in basic and acidic residues. Residues 304-338 (ATTGDAEGKSPTAGDKDDQTLTTKPRLQRGGSSAS) are disordered. Over residues 323 to 338 (TLTTKPRLQRGGSSAS) the composition is skewed to polar residues. The helical transmembrane segment at 460-480 (QLTYLLVLPIVFPLWVSLPDV) threads the bilayer. The Cytoplasmic portion of the chain corresponds to 481–487 (RNPRSRK). Residues 488-508 (FFPITFFGSISWIAFFSYLMV) traverse the membrane as a helical segment. Residues 509-523 (WWAHQVGETIGISEE) are Extracellular-facing. Residues 524-544 (IMGLTILAAGTSIPDLITSVI) traverse the membrane as a helical segment. An Alpha-2 repeat occupies 531-562 (AAGTSIPDLITSVIVARKGLGDMAVSSSVGSN). At 545–562 (VARKGLGDMAVSSSVGSN) the chain is on the cytoplasmic side. A helical transmembrane segment spans residues 563-583 (IFDITVGLPLPWLLYAVINNF). The Extracellular portion of the chain corresponds to 584–592 (SPVTVSSNG). A helical membrane pass occupies residues 593 to 613 (LFCAIVLLFIMLLFVILSIAF). The Cytoplasmic segment spans residues 614-620 (CKWRMNK). A helical transmembrane segment spans residues 621–641 (FLGFLMFGLYFVFLIVSVLLE). Residues 642–651 (DKVIQCPVSI) lie on the Extracellular side of the membrane.

It belongs to the Ca(2+):cation antiporter (CaCA) (TC 2.A.19) family. SLC24A subfamily. As to expression, retinal cones. Found in the cone inner segment layer and in a subpopulation of ganglion cells.

It localises to the cell membrane. It catalyses the reaction Ca(2+)(out) + K(+)(out) + 4 Na(+)(in) = Ca(2+)(in) + K(+)(in) + 4 Na(+)(out). Calcium, potassium:sodium antiporter that transports 1 Ca(2+) and 1 K(+) in exchange for 4 Na(+). Required for learming and memory by regulating neuronal Ca(2+), which is essential for the development of synaptic plasticity. The protein is Sodium/potassium/calcium exchanger 2 (SLC24A2) of Gallus gallus (Chicken).